We begin with the raw amino-acid sequence, 273 residues long: Octanoyltransferase (273 aa).

The region spanning 35 to 254 is the BPL/LPL catalytic domain; that stretch reads DRVPDTCLLL…HLRDILENAE (220 aa). Residues 73-80, 184-186, and 197-199 contribute to the substrate site; these read RGGKITWH, AIG, and GFA. C215 (acyl-thioester intermediate) is an active-site residue.

This sequence belongs to the LipB family.

Its subcellular location is the cytoplasm. The enzyme catalyses octanoyl-[ACP] + L-lysyl-[protein] = N(6)-octanoyl-L-lysyl-[protein] + holo-[ACP] + H(+). It participates in protein modification; protein lipoylation via endogenous pathway; protein N(6)-(lipoyl)lysine from octanoyl-[acyl-carrier-protein]: step 1/2. Its function is as follows. Catalyzes the transfer of endogenously produced octanoic acid from octanoyl-acyl-carrier-protein onto the lipoyl domains of lipoate-dependent enzymes. Lipoyl-ACP can also act as a substrate although octanoyl-ACP is likely to be the physiological substrate. This chain is Octanoyltransferase, found in Streptomyces griseus subsp. griseus (strain JCM 4626 / CBS 651.72 / NBRC 13350 / KCC S-0626 / ISP 5235).